We begin with the raw amino-acid sequence, 305 residues long: NK1 transcription factor-related protein 2 (305 aa).

Disordered stretches follow at residues 51 to 158 and 210 to 257; these read EEVE…KPRR and KWKK…PGAL. The segment covering 87–96 has biased composition (acidic residues); the sequence is SEAEEEEEAE. Positions 97–115 are enriched in basic and acidic residues; sequence DAGRAHQPERWQGVHEGSP. The segment covering 129 to 140 has biased composition (low complexity); that stretch reads AEGLPASPGSPG. Residues 156–215 constitute a DNA-binding region (homeobox); the sequence is PRRARTAFTYEQLVALENKFRATRYLSVCERLNLALSLSLTETQVKIWFQNRRTKWKKQN.

It belongs to the NK-1 homeobox family. In terms of assembly, interacts (via the homeodomain) with HIPK1, HIPK2, and HIPK3. Post-translationally, phosphorylated by HIPK2 in vitro. As to expression, expression detected in the brain, testis and spleen. In the testis, expressed in the germ cells of the seminiferous epithelium, predominantly in elongating spermatids and spermatozoa. Expressed throughout the brain with highest levels in regions of the cerebral cortex, hippocampus, diencephalon, pons, medulla and cerebellum.

Its subcellular location is the nucleus. It localises to the nucleolus. Functionally, transcriptional repressor. May play a role in early development as a Wnt/beta-catenin effector, hence controlling pluripotency and preimplantation development of embryonic stem cells. May promote adipogenesis in mesenchymal stem cells, possibly by inhibiting the expression of the antiadipogenic factor NR2F2. May inhibit osteoblastogenic differentiation. The polypeptide is NK1 transcription factor-related protein 2 (Nkx1-2) (Mus musculus (Mouse)).